The sequence spans 226 residues: Orotidine 5'-phosphate decarboxylase (226 aa).

Residues aspartate 8, lysine 30, 58 to 67 (DLKIHDIPNT), threonine 117, arginine 177, glutamine 186, glycine 206, and arginine 207 each bind substrate. Lysine 60 (proton donor) is an active-site residue.

This sequence belongs to the OMP decarboxylase family. Type 1 subfamily. In terms of assembly, homodimer.

The enzyme catalyses orotidine 5'-phosphate + H(+) = UMP + CO2. It functions in the pathway pyrimidine metabolism; UMP biosynthesis via de novo pathway; UMP from orotate: step 2/2. Its function is as follows. Catalyzes the decarboxylation of orotidine 5'-monophosphate (OMP) to uridine 5'-monophosphate (UMP). This chain is Orotidine 5'-phosphate decarboxylase, found in Campylobacter jejuni subsp. jejuni serotype O:6 (strain 81116 / NCTC 11828).